Reading from the N-terminus, the 119-residue chain is MSRRTEKVASLLQQELGAILEKEYPRGGPLLTVVEVKITADLGLARAFVSIIGNEEERAETMEFLNDETKNIRRILSSKIRHQFRRIPELEFREDLLYEKASRIEELLRSVRKESGENE.

This sequence belongs to the RbfA family. As to quaternary structure, monomer. Binds 30S ribosomal subunits, but not 50S ribosomal subunits or 70S ribosomes.

The protein resides in the cytoplasm. In terms of biological role, one of several proteins that assist in the late maturation steps of the functional core of the 30S ribosomal subunit. Associates with free 30S ribosomal subunits (but not with 30S subunits that are part of 70S ribosomes or polysomes). Required for efficient processing of 16S rRNA. May interact with the 5'-terminal helix region of 16S rRNA. The protein is Ribosome-binding factor A of Chlorobium phaeovibrioides (strain DSM 265 / 1930) (Prosthecochloris vibrioformis (strain DSM 265)).